The primary structure comprises 316 residues: UDP-N-acetylenolpyruvoylglucosamine reductase (316 aa).

An FAD-binding PCMH-type domain is found at Val27–Lys225. Arg190 is a catalytic residue. Ser239 (proton donor) is an active-site residue. Glu309 is an active-site residue.

Belongs to the MurB family. FAD is required as a cofactor.

The protein localises to the cytoplasm. It catalyses the reaction UDP-N-acetyl-alpha-D-muramate + NADP(+) = UDP-N-acetyl-3-O-(1-carboxyvinyl)-alpha-D-glucosamine + NADPH + H(+). It functions in the pathway cell wall biogenesis; peptidoglycan biosynthesis. Cell wall formation. This Coxiella burnetii (strain CbuG_Q212) (Coxiella burnetii (strain Q212)) protein is UDP-N-acetylenolpyruvoylglucosamine reductase.